The following is a 228-amino-acid chain: 5'-methylthioadenosine/S-adenosylhomocysteine nucleosidase (228 aa).

Glu-11 (proton acceptor) is an active-site residue. Substrate-binding positions include Gly-77, Ile-151, and 172–173 (ME). The active-site Proton donor is the Asp-196.

It belongs to the PNP/UDP phosphorylase family. MtnN subfamily.

It catalyses the reaction S-adenosyl-L-homocysteine + H2O = S-(5-deoxy-D-ribos-5-yl)-L-homocysteine + adenine. The catalysed reaction is S-methyl-5'-thioadenosine + H2O = 5-(methylsulfanyl)-D-ribose + adenine. It carries out the reaction 5'-deoxyadenosine + H2O = 5-deoxy-D-ribose + adenine. Its pathway is amino-acid biosynthesis; L-methionine biosynthesis via salvage pathway; S-methyl-5-thio-alpha-D-ribose 1-phosphate from S-methyl-5'-thioadenosine (hydrolase route): step 1/2. In terms of biological role, catalyzes the irreversible cleavage of the glycosidic bond in both 5'-methylthioadenosine (MTA) and S-adenosylhomocysteine (SAH/AdoHcy) to adenine and the corresponding thioribose, 5'-methylthioribose and S-ribosylhomocysteine, respectively. Also cleaves 5'-deoxyadenosine, a toxic by-product of radical S-adenosylmethionine (SAM) enzymes, into 5-deoxyribose and adenine. The chain is 5'-methylthioadenosine/S-adenosylhomocysteine nucleosidase from Staphylococcus haemolyticus (strain JCSC1435).